The sequence spans 595 residues: MHRYRSHTCAALRKSDVGSTVRLSGWVHRVRDHGGVLFIDLRDHYGMTQVVADPDSPAFKAAETVRGEWVIRVDGAVKARTDETVNRNMPTGEVELYAREIEVLSAAKELPLPVFGEPDYPEDVRLKYRFLDLRRETLHKNIVRRTEIIAAMRRRMSDIGFTEYTTPILTASSPEGARDFLVPSRIHPGNFYALPQAPQQYKQLLMVAGFDRYFQIAPCFRDEDPRADRLPGEFYQLDLEMSFVEQEDVWDAMEPMIRAIFADFAGGKPVTDKFPRIPYDAAIRKYGSDKPDLRNPIEMQEVTEHFAGSGFKVFANMIASNPKVEIWAIPAKTGGSRAFCDRMNAWAQSQGQPGLGYIFWRKEGEKLEGAGPLAKNIGEERTDAIRTQLGLGDGDACFFVAGEPAKFYKFAGEARTRAGEELNLVDRERYELCWIVDFPFYEWNEEEKRVDFAHNPFSMPQGGLTALSSDDLLSIKAFQYDMVCNGFEIASGSIRNQSPELMVKAFENVGLSQADVEERFGGLYRAFQYGAPPHGGMAFGIDRIVMLLVGAKNLREISLFPMNQQAQDLLMGAPSPAEPAQLRELAIRPVPQKKD.

An L-aspartate-binding site is contributed by Glu175. The tract at residues 199-202 (QQYK) is aspartate. Arg221 and His454 together coordinate L-aspartate. 221-223 (RDE) contributes to the ATP binding site. Glu488 contributes to the ATP binding site. Residue Arg495 participates in L-aspartate binding. 540-543 (GIDR) lines the ATP pocket.

The protein belongs to the class-II aminoacyl-tRNA synthetase family. Type 1 subfamily. As to quaternary structure, homodimer.

It localises to the cytoplasm. It catalyses the reaction tRNA(Asx) + L-aspartate + ATP = L-aspartyl-tRNA(Asx) + AMP + diphosphate. Aspartyl-tRNA synthetase with relaxed tRNA specificity since it is able to aspartylate not only its cognate tRNA(Asp) but also tRNA(Asn). Reaction proceeds in two steps: L-aspartate is first activated by ATP to form Asp-AMP and then transferred to the acceptor end of tRNA(Asp/Asn). The polypeptide is Aspartate--tRNA(Asp/Asn) ligase (Sinorhizobium medicae (strain WSM419) (Ensifer medicae)).